The primary structure comprises 92 residues: PqqA binding protein (92 aa).

Belongs to the PqqD family. In terms of assembly, monomer. Interacts with PqqE.

Its pathway is cofactor biosynthesis; pyrroloquinoline quinone biosynthesis. Functionally, functions as a PqqA binding protein and presents PqqA to PqqE, in the pyrroloquinoline quinone (PQQ) biosynthetic pathway. This is PqqA binding protein from Xanthomonas campestris pv. campestris (strain B100).